Reading from the N-terminus, the 239-residue chain is Vesicle-associated protein 1-3 (239 aa).

The residue at position 1 (Met-1) is an N-acetylmethionine. An N-acetylthreonine; in Vesicle-associated protein 1-3, N-terminally processed modification is found at Thr-2. Topologically, residues 2 to 215 are cytoplasmic; it reads TTGDLVNIHP…RKETSKKQSG (214 aa). The 122-residue stretch at 6–127 folds into the MSP domain; it reads LVNIHPTELK…EDFKLRVVYI (122 aa). Phosphoserine occurs at positions 133 and 164. A coiled-coil region spans residues 179–214; sequence SMISKLTEEKTSATQQSQKLRLELEMLRKETSKKQS. The chain crosses the membrane as a helical; Anchor for type IV membrane protein span at residues 216 to 236; that stretch reads GHSLLLMLLVGLLGCVIGYLL.

Belongs to the VAMP-associated protein (VAP) (TC 9.B.17) family.

It is found in the endoplasmic reticulum membrane. Its function is as follows. May play a role in vesicle trafficking. The polypeptide is Vesicle-associated protein 1-3 (PVA13) (Arabidopsis thaliana (Mouse-ear cress)).